A 212-amino-acid polypeptide reads, in one-letter code: ER lumen protein-retaining receptor 2 (212 aa).

Over Met-1–Phe-4 the chain is Lumenal. Residues Arg-5–Trp-24 traverse the membrane as a helical segment. Residues Lys-25–Ile-32 lie on the Cytoplasmic side of the membrane. Residues Ser-33 to Phe-52 form a helical membrane-spanning segment. An interaction with the K-D-E-L motif on target proteins region spans residues Arg-47–Tyr-48. Residues Thr-53–Leu-58 are Lumenal-facing. A helical membrane pass occupies residues Tyr-59–Tyr-79. At Met-80 to Thr-92 the chain is on the cytoplasmic side. A helical transmembrane segment spans residues Phe-93–Asn-110. Residues His-111–Leu-116 are Lumenal-facing. The chain crosses the membrane as a helical span at residues Glu-117–Leu-135. The Cytoplasmic portion of the chain corresponds to Phe-136–Thr-149. The chain crosses the membrane as a helical span at residues His-150–Trp-168. The tract at residues Arg-159–Arg-169 is interaction with the K-D-E-L motif on target proteins. Residues Arg-169–Leu-178 are Lumenal-facing. The chain crosses the membrane as a helical span at residues Ile-179–Val-199. At Thr-200–Ala-212 the chain is on the cytoplasmic side. Residues Lys-204–Lys-207 form an important for recycling of cargo proteins with the sequence motif K-D-E-L from the Golgi to the endoplasmic reticulum region.

The protein belongs to the ERD2 family.

The protein resides in the endoplasmic reticulum membrane. It localises to the golgi apparatus membrane. Its subcellular location is the cytoplasmic vesicle. It is found in the COPI-coated vesicle membrane. Membrane receptor that binds the K-D-E-L sequence motif in the C-terminal part of endoplasmic reticulum resident proteins and maintains their localization in that compartment by participating to their vesicle-mediated recycling back from the Golgi. Binding is pH dependent, and is optimal at pH 5-5.4. The sequence is that of ER lumen protein-retaining receptor 2 (KDELR2) from Gallus gallus (Chicken).